The chain runs to 276 residues: Large ribosomal subunit protein uL2 (276 aa).

A disordered region spans residues 224–258; that stretch reads VAMNPVDHPHGGGEGRTGEGRVPVSPWGTPTKGYR. Over residues 230–242 the composition is skewed to basic and acidic residues; the sequence is DHPHGGGEGRTGE.

The protein belongs to the universal ribosomal protein uL2 family. In terms of assembly, part of the 50S ribosomal subunit. Forms a bridge to the 30S subunit in the 70S ribosome.

Functionally, one of the primary rRNA binding proteins. Required for association of the 30S and 50S subunits to form the 70S ribosome, for tRNA binding and peptide bond formation. It has been suggested to have peptidyltransferase activity; this is somewhat controversial. Makes several contacts with the 16S rRNA in the 70S ribosome. The polypeptide is Large ribosomal subunit protein uL2 (Polynucleobacter necessarius subsp. necessarius (strain STIR1)).